Here is a 231-residue protein sequence, read N- to C-terminus: uncharacterized protein (231 aa).

Residue 10 to 34 coordinates NADP(+); the sequence is VVTGAGSGIGEAIATLLHEEGAKVV. Position 140 (serine 140) interacts with substrate. Residue tyrosine 153 is the Proton acceptor of the active site.

Belongs to the short-chain dehydrogenases/reductases (SDR) family.

This is an uncharacterized protein from Staphylococcus aureus (strain COL).